Consider the following 78-residue polypeptide: Large ribosomal subunit protein bL28 (78 aa).

Residues 1 to 25 (MSRVCQVTGKRPAVGNNRSHAKNAT) are disordered.

Belongs to the bacterial ribosomal protein bL28 family.

This is Large ribosomal subunit protein bL28 from Aliivibrio fischeri (strain ATCC 700601 / ES114) (Vibrio fischeri).